We begin with the raw amino-acid sequence, 286 residues long: Bifunctional protein FolD (286 aa).

NADP(+) is bound by residues 166–168 (GAS) and I232.

This sequence belongs to the tetrahydrofolate dehydrogenase/cyclohydrolase family. In terms of assembly, homodimer.

It carries out the reaction (6R)-5,10-methylene-5,6,7,8-tetrahydrofolate + NADP(+) = (6R)-5,10-methenyltetrahydrofolate + NADPH. The catalysed reaction is (6R)-5,10-methenyltetrahydrofolate + H2O = (6R)-10-formyltetrahydrofolate + H(+). The protein operates within one-carbon metabolism; tetrahydrofolate interconversion. Its function is as follows. Catalyzes the oxidation of 5,10-methylenetetrahydrofolate to 5,10-methenyltetrahydrofolate and then the hydrolysis of 5,10-methenyltetrahydrofolate to 10-formyltetrahydrofolate. This Shewanella denitrificans (strain OS217 / ATCC BAA-1090 / DSM 15013) protein is Bifunctional protein FolD.